Reading from the N-terminus, the 126-residue chain is Aspartate 1-decarboxylase (126 aa).

The Schiff-base intermediate with substrate; via pyruvic acid role is filled by Ser25. A Pyruvic acid (Ser) modification is found at Ser25. Thr57 is a binding site for substrate. Tyr58 acts as the Proton donor in catalysis. Gly73–Ala75 is a binding site for substrate.

This sequence belongs to the PanD family. Heterooctamer of four alpha and four beta subunits. Pyruvate serves as cofactor. In terms of processing, is synthesized initially as an inactive proenzyme, which is activated by self-cleavage at a specific serine bond to produce a beta-subunit with a hydroxyl group at its C-terminus and an alpha-subunit with a pyruvoyl group at its N-terminus.

It localises to the cytoplasm. The enzyme catalyses L-aspartate + H(+) = beta-alanine + CO2. It functions in the pathway cofactor biosynthesis; (R)-pantothenate biosynthesis; beta-alanine from L-aspartate: step 1/1. Catalyzes the pyruvoyl-dependent decarboxylation of aspartate to produce beta-alanine. The chain is Aspartate 1-decarboxylase from Erwinia tasmaniensis (strain DSM 17950 / CFBP 7177 / CIP 109463 / NCPPB 4357 / Et1/99).